Reading from the N-terminus, the 328-residue chain is MPLHNLTRFPRLEFIGAPTPLEYLPRFSDYLGREIFIKRDDVIPMAMGGNKLRKLEFLAADALREGADTLITAGAIQSNHVRQTAAVAAKLGLHCVALLENPIGTTAENYLTNGNRLLLDLFNTQIEMCDALTDPNTQLEELATRVEAQGFRPYVIPVGGSNALGALGYVESALEIAQQCEGAVNISSVVVASGSAGTHAGLAVGLEHLMPESELIGVTVSRSVADQLPKVVNLQQAIAKELELTASAEILLWDDYFAPGYGVPNDEGMEAVKLLARLEGILLDPVYTGKAMAGLIDGISQKRFKDEGPILFIHTGGAPALFAYHPHV.

At Lys-51 the chain carries N6-(pyridoxal phosphate)lysine.

This sequence belongs to the ACC deaminase/D-cysteine desulfhydrase family. As to quaternary structure, homodimer. The cofactor is pyridoxal 5'-phosphate.

The catalysed reaction is D-cysteine + H2O = hydrogen sulfide + pyruvate + NH4(+) + H(+). In terms of biological role, catalyzes the alpha,beta-elimination reaction of D-cysteine and of several D-cysteine derivatives. It could be a defense mechanism against D-cysteine. This chain is D-cysteine desulfhydrase, found in Escherichia coli O7:K1 (strain IAI39 / ExPEC).